We begin with the raw amino-acid sequence, 121 residues long: Amelogenin (121 aa).

Disordered stretches follow at residues 1-20 (LHHQ…HALQ) and 32-121 (QPMQ…WPAT). Positions 48–58 (SVTPTQHHQSN) are enriched in polar residues. The segment covering 59-71 (LPQPAQQPFQPQV) has biased composition (low complexity). A compositionally biased stretch (pro residues) spans 85–111 (PAHPMPPMPQPPLPPMFPMQPLPPLLP).

The protein belongs to the amelogenin family.

The protein resides in the secreted. The protein localises to the extracellular space. It is found in the extracellular matrix. In terms of biological role, plays a role in the biomineralization of teeth. Seems to regulate the formation of crystallites during the secretory stage of tooth enamel development. Thought to play a major role in the structural organization and mineralization of developing enamel. The sequence is that of Amelogenin (AMEL) from Ornithorhynchus anatinus (Duckbill platypus).